We begin with the raw amino-acid sequence, 431 residues long: Large envelope protein (431 aa).

The N-myristoyl glycine; by host moiety is linked to residue Gly2. A pre-S1 region spans residues 2–148; that stretch reads GNNIKVTFNP…PPLRDTHPHL (147 aa). Residues 2 to 207 are pre-S; that stretch reads GNNIKVTFNP…PSTTGDPALS (206 aa). The Virion surface; in external conformation portion of the chain corresponds to 2–214; that stretch reads GNNIKVTFNP…ALSPEMSPSS (213 aa). Topologically, residues 2–286 are intravirion; in internal conformation; that stretch reads GNNIKVTFNP…NGFRWMYLRR (285 aa). Asn3 carries N-linked (GlcNAc...) asparagine glycosylation. Residues 115–147 are disordered; that stretch reads IPRGLVPPQTPTNRDQGRKPTPPTPPLRDTHPH. The tract at residues 149 to 207 is pre-S2; that stretch reads TMKNQTFHLQGFVDGLRDLTTTERQHNAYGDPFTTLSPAVPTVSTILSPPSTTGDPALS. The chain crosses the membrane as a helical span at residues 215 to 235; it reads LLGLLAGLQVVYFLWTKILTI. Over 236-286 the chain is Intravirion; in external conformation; it reads AQNLDWWWTSLSFPGGIPECTGQNSQFQTCKHLPTSCPPTCNGFRWMYLRR. A helical membrane pass occupies residues 287 to 307; that stretch reads FIIYLLVLLLCLIFLLVLLDW. Residues 308-379 lie on the Virion surface side of the membrane; sequence KGFIPVCPLQ…WALARFSWLN (72 aa). N-linked (GlcNAc...) asparagine; by host glycosylation is present at Asn351. The chain crosses the membrane as a helical span at residues 380–400; sequence LLVPLLQWLGGISLIAWFLLI. Residues 401-406 lie on the Intravirion side of the membrane; sequence WMIWFW. Residues 407–429 traverse the membrane as a helical segment; that stretch reads GPALLSILPPFIPIFVLFFLIWV. Residues 430–431 are Virion surface-facing; the sequence is YI.

It belongs to the orthohepadnavirus major surface antigen family. In its internal form (Li-HBsAg), interacts with the capsid protein and with the isoform S. Interacts with host chaperone CANX. In terms of assembly, associates with host chaperone CANX through its pre-S2 N glycan; this association may be essential for isoform M proper secretion. As to quaternary structure, interacts with isoform L. Interacts with the antigens of satellite virus HDV (HDVAgs); this interaction is required for encapsidation of HDV genomic RNA. Post-translationally, isoform M is N-terminally acetylated by host at a ratio of 90%, and N-glycosylated by host at the pre-S2 region. In terms of processing, myristoylated.

It localises to the virion membrane. The large envelope protein exists in two topological conformations, one which is termed 'external' or Le-HBsAg and the other 'internal' or Li-HBsAg. In its external conformation the protein attaches the virus to cell receptors and thereby initiating infection. This interaction determines the species specificity and liver tropism. This attachment induces virion internalization predominantly through caveolin-mediated endocytosis. The large envelope protein also assures fusion between virion membrane and endosomal membrane. In its internal conformation the protein plays a role in virion morphogenesis and mediates the contact with the nucleocapsid like a matrix protein. Functionally, the middle envelope protein plays an important role in the budding of the virion. It is involved in the induction of budding in a nucleocapsid independent way. In this process the majority of envelope proteins bud to form subviral lipoprotein particles of 22 nm of diameter that do not contain a nucleocapsid. In Marmota monax (Woodchuck), this protein is Large envelope protein.